A 1464-amino-acid chain; its full sequence is Gag-Pol polyprotein (1464 aa).

A lipid anchor (N-myristoyl glycine; by host) is attached at G2. Residues 7–31 are interaction with Gp41; it reads VLRGKKADELERIRLRPGGKKKYRL. The short motif at 16–22 is the Nuclear export signal element; the sequence is LERIRLR. Residues 26 to 32 carry the Nuclear localization signal motif; the sequence is KKKYRLK. Residues 111–136 form a disordered region; it reads ETGTAEKMPSTSRPTAPSSEKGGNYP. Positions 119 to 128 are enriched in polar residues; that stretch reads PSTSRPTAPS. Y135 carries the post-translational modification Phosphotyrosine; by host. Positions 191-228 are interaction with human PPIA/CYPA and NUP153; sequence NCVGDHQAAMQIIREIINEEAAEWDVQHPIPGPLPAGQ. The interval 279–365 is dimerization/Multimerization of capsid protein p24; sequence YNPTNILDIK…GGPGQKARLM (87 aa). 2 CCHC-type zinc fingers span residues 389–406 and 410–427; these read FKCW…QCRA and QGCW…NCPD. Residues 432-500 form a disordered region; sequence FLRTGPLGKE…RGLTAPRAGG (69 aa). Positions 456–469 are enriched in low complexity; that stretch reads TNSTPSGSSSGSTG. The segment covering 473–485 has biased composition (basic and acidic residues); it reads AAREKTERAERET. A dimerization of protease region spans residues 514-518; that stretch reads PQFSL. The 70-residue stretch at 533 to 602 folds into the Peptidase A2 domain; it reads VEVLLDTGAD…TPINIFGRNI (70 aa). D538 functions as the For protease activity; shared with dimeric partner in the catalytic mechanism. 2 dimerization of protease regions span residues 562–568 and 601–613; these read GIGGFIN and NILT…LNLP. One can recognise a Reverse transcriptase domain in the interval 656–846; the sequence is EGQLEEAPPT…PPYHWMGYEL (191 aa). Residues D722, D797, and D798 each coordinate Mg(2+). Positions 839 to 847 are RT 'primer grip'; sequence YHWMGYELW. Positions 1009–1025 match the Tryptophan repeat motif motif; the sequence is WEQWWDNYWQVTWIPDW. The 124-residue stretch at 1045–1168 folds into the RNase H type-1 domain; the sequence is IPGAETFYTD…VDHLVSQGIR (124 aa). Positions 1054, 1089, 1109, and 1160 each coordinate Mg(2+). The segment at 1174–1215 adopts an Integrase-type zinc-finger fold; the sequence is EKIEPAQEEHEKYHSNVKELSHKFGIPNLVARQIVNSCAQCQ. Zn(2+) contacts are provided by H1183, H1187, C1211, and C1214. Residues 1224–1375 enclose the Integrase catalytic domain; that stretch reads QVNAELGTWQ…TPSERLINMI (152 aa). Residues D1235, D1287, and E1323 each coordinate Mg(2+). A DNA-binding region (integrase-type) is located at residues 1394-1441; it reads FRVYFREGRDQLWKGPGELLWKGEGAVLVKVGTDIKIIPRRKAKIIRD.

As to quaternary structure, homotrimer; further assembles as hexamers of trimers. Interacts with gp41 (via C-terminus). Interacts with host CALM1; this interaction induces a conformational change in the Matrix protein, triggering exposure of the myristate group. Interacts with host AP3D1; this interaction allows the polyprotein trafficking to multivesicular bodies during virus assembly. Part of the pre-integration complex (PIC) which is composed of viral genome, matrix protein, Vpr and integrase. In terms of assembly, homodimer; the homodimer further multimerizes as homohexamers or homopentamers. Interacts with human PPIA/CYPA. Interacts with human NUP153. Interacts with host PDZD8; this interaction stabilizes the capsid. Interacts with monkey TRIM5; this interaction destabilizes the capsid. Homodimer, whose active site consists of two apposed aspartic acid residues. As to quaternary structure, heterodimer of p66 RT and p51 RT (RT p66/p51). Heterodimerization of RT is essential for DNA polymerase activity. The overall folding of the subdomains is similar in p66 RT and p51 RT but the spatial arrangements of the subdomains are dramatically different. In terms of assembly, homotetramer; may further associate as a homohexadecamer. Part of the pre-integration complex (PIC) which is composed of viral genome, matrix protein, Vpr and integrase. Interacts with human SMARCB1/INI1 and human PSIP1/LEDGF isoform 1. Interacts with human KPNA3; this interaction might play a role in nuclear import of the pre-integration complex. Interacts with human NUP153; this interaction might play a role in nuclear import of the pre-integration complex. Requires Mg(2+) as cofactor. In terms of processing, specific enzymatic cleavages by the viral protease yield mature proteins. The protease is released by autocatalytic cleavage. The polyprotein is cleaved during and after budding, this process is termed maturation. Proteolytic cleavage of p66 RT removes the RNase H domain to yield the p51 RT subunit. Nucleocapsid protein p7 might be further cleaved after virus entry.

It is found in the host cell membrane. It localises to the host endosome. The protein resides in the host multivesicular body. Its subcellular location is the virion membrane. The protein localises to the host nucleus. It is found in the host cytoplasm. It localises to the virion. It catalyses the reaction Endopeptidase for which the P1 residue is preferably hydrophobic.. The catalysed reaction is Endohydrolysis of RNA in RNA/DNA hybrids. Three different cleavage modes: 1. sequence-specific internal cleavage of RNA. Human immunodeficiency virus type 1 and Moloney murine leukemia virus enzymes prefer to cleave the RNA strand one nucleotide away from the RNA-DNA junction. 2. RNA 5'-end directed cleavage 13-19 nucleotides from the RNA end. 3. DNA 3'-end directed cleavage 15-20 nucleotides away from the primer terminus.. The enzyme catalyses 3'-end directed exonucleolytic cleavage of viral RNA-DNA hybrid.. It carries out the reaction DNA(n) + a 2'-deoxyribonucleoside 5'-triphosphate = DNA(n+1) + diphosphate. With respect to regulation, protease: The viral protease is inhibited by many synthetic protease inhibitors (PIs), such as amprenavir, atazanavir, indinavir, loprinavir, nelfinavir, ritonavir and saquinavir. Use of protease inhibitors in tritherapy regimens permit more ambitious therapeutic strategies. Reverse transcriptase/ribonuclease H: RT can be inhibited either by nucleoside RT inhibitors (NRTIs) or by non nucleoside RT inhibitors (NNRTIs). NRTIs act as chain terminators, whereas NNRTIs inhibit DNA polymerization by binding a small hydrophobic pocket near the RT active site and inducing an allosteric change in this region. Classical NRTIs are abacavir, adefovir (PMEA), didanosine (ddI), lamivudine (3TC), stavudine (d4T), tenofovir (PMPA), zalcitabine (ddC), and zidovudine (AZT). Classical NNRTIs are atevirdine (BHAP U-87201E), delavirdine, efavirenz (DMP-266), emivirine (I-EBU), and nevirapine (BI-RG-587). The tritherapies used as a basic effective treatment of AIDS associate two NRTIs and one NNRTI. Mediates, with Gag polyprotein, the essential events in virion assembly, including binding the plasma membrane, making the protein-protein interactions necessary to create spherical particles, recruiting the viral Env proteins, and packaging the genomic RNA via direct interactions with the RNA packaging sequence (Psi). Gag-Pol polyprotein may regulate its own translation, by the binding genomic RNA in the 5'-UTR. At low concentration, the polyprotein would promote translation, whereas at high concentration, the polyprotein would encapsidate genomic RNA and then shut off translation. In terms of biological role, targets the polyprotein to the plasma membrane via a multipartite membrane-binding signal, that includes its myristoylated N-terminus. Matrix protein is part of the pre-integration complex. Implicated in the release from host cell mediated by Vpu. Binds to RNA. Its function is as follows. Forms the conical core that encapsulates the genomic RNA-nucleocapsid complex in the virion. Most core are conical, with only 7% tubular. The core is constituted by capsid protein hexamer subunits. The core is disassembled soon after virion entry. Host restriction factors such as TRIM5-alpha or TRIMCyp bind retroviral capsids and cause premature capsid disassembly, leading to blocks in reverse transcription. Capsid restriction by TRIM5 is one of the factors which restricts HIV-1 to the human species. Host PIN1 apparently facilitates the virion uncoating. On the other hand, interactions with PDZD8 or CYPA stabilize the capsid. Functionally, encapsulates and protects viral dimeric unspliced genomic RNA (gRNA). Binds these RNAs through its zinc fingers. Acts as a nucleic acid chaperone which is involved in rearangement of nucleic acid secondary structure during gRNA retrotranscription. Also facilitates template switch leading to recombination. As part of the polyprotein, participates in gRNA dimerization, packaging, tRNA incorporation and virion assembly. Aspartyl protease that mediates proteolytic cleavages of Gag and Gag-Pol polyproteins during or shortly after the release of the virion from the plasma membrane. Cleavages take place as an ordered, step-wise cascade to yield mature proteins. This process is called maturation. Displays maximal activity during the budding process just prior to particle release from the cell. Also cleaves Nef and Vif, probably concomitantly with viral structural proteins on maturation of virus particles. Hydrolyzes host EIF4GI and PABP1 in order to shut off the capped cellular mRNA translation. The resulting inhibition of cellular protein synthesis serves to ensure maximal viral gene expression and to evade host immune response. In terms of biological role, multifunctional enzyme that converts the viral RNA genome into dsDNA in the cytoplasm, shortly after virus entry into the cell. This enzyme displays a DNA polymerase activity that can copy either DNA or RNA templates, and a ribonuclease H (RNase H) activity that cleaves the RNA strand of RNA-DNA heteroduplexes in a partially processive 3' to 5' endonucleasic mode. Conversion of viral genomic RNA into dsDNA requires many steps. A tRNA(3)-Lys binds to the primer-binding site (PBS) situated at the 5'-end of the viral RNA. RT uses the 3' end of the tRNA primer to perform a short round of RNA-dependent minus-strand DNA synthesis. The reading proceeds through the U5 region and ends after the repeated (R) region which is present at both ends of viral RNA. The portion of the RNA-DNA heteroduplex is digested by the RNase H, resulting in a ssDNA product attached to the tRNA primer. This ssDNA/tRNA hybridizes with the identical R region situated at the 3' end of viral RNA. This template exchange, known as minus-strand DNA strong stop transfer, can be either intra- or intermolecular. RT uses the 3' end of this newly synthesized short ssDNA to perform the RNA-dependent minus-strand DNA synthesis of the whole template. RNase H digests the RNA template except for two polypurine tracts (PPTs) situated at the 5'-end and near the center of the genome. It is not clear if both polymerase and RNase H activities are simultaneous. RNase H probably can proceed both in a polymerase-dependent (RNA cut into small fragments by the same RT performing DNA synthesis) and a polymerase-independent mode (cleavage of remaining RNA fragments by free RTs). Secondly, RT performs DNA-directed plus-strand DNA synthesis using the PPTs that have not been removed by RNase H as primers. PPTs and tRNA primers are then removed by RNase H. The 3' and 5' ssDNA PBS regions hybridize to form a circular dsDNA intermediate. Strand displacement synthesis by RT to the PBS and PPT ends produces a blunt ended, linear dsDNA copy of the viral genome that includes long terminal repeats (LTRs) at both ends. Its function is as follows. Catalyzes viral DNA integration into the host chromosome, by performing a series of DNA cutting and joining reactions. This enzyme activity takes place after virion entry into a cell and reverse transcription of the RNA genome in dsDNA. The first step in the integration process is 3' processing. This step requires a complex comprising the viral genome, matrix protein, Vpr and integrase. This complex is called the pre-integration complex (PIC). The integrase protein removes 2 nucleotides from each 3' end of the viral DNA, leaving recessed CA OH's at the 3' ends. In the second step, the PIC enters cell nucleus. This process is mediated through integrase and Vpr proteins, and allows the virus to infect a non dividing cell. This ability to enter the nucleus is specific of lentiviruses, other retroviruses cannot and rely on cell division to access cell chromosomes. In the third step, termed strand transfer, the integrase protein joins the previously processed 3' ends to the 5' ends of strands of target cellular DNA at the site of integration. The 5'-ends are produced by integrase-catalyzed staggered cuts, 5 bp apart. A Y-shaped, gapped, recombination intermediate results, with the 5'-ends of the viral DNA strands and the 3' ends of target DNA strands remaining unjoined, flanking a gap of 5 bp. The last step is viral DNA integration into host chromosome. This involves host DNA repair synthesis in which the 5 bp gaps between the unjoined strands are filled in and then ligated. Since this process occurs at both cuts flanking the HIV genome, a 5 bp duplication of host DNA is produced at the ends of HIV-1 integration. Alternatively, Integrase may catalyze the excision of viral DNA just after strand transfer, this is termed disintegration. The chain is Gag-Pol polyprotein (gag-pol) from Homo sapiens (Human).